A 392-amino-acid polypeptide reads, in one-letter code: ATP phosphoribosyltransferase regulatory subunit (392 aa).

This sequence belongs to the class-II aminoacyl-tRNA synthetase family. HisZ subfamily. Heteromultimer composed of HisG and HisZ subunits.

It localises to the cytoplasm. Its pathway is amino-acid biosynthesis; L-histidine biosynthesis; L-histidine from 5-phospho-alpha-D-ribose 1-diphosphate: step 1/9. Functionally, required for the first step of histidine biosynthesis. May allow the feedback regulation of ATP phosphoribosyltransferase activity by histidine. This chain is ATP phosphoribosyltransferase regulatory subunit, found in Prochlorococcus marinus (strain MIT 9313).